A 234-amino-acid chain; its full sequence is Thiamine-phosphate synthase (234 aa).

4-amino-2-methyl-5-(diphosphooxymethyl)pyrimidine contacts are provided by residues 52–56 (QYRSK) and N84. Residues D85 and D104 each contribute to the Mg(2+) site. S123 is a binding site for 4-amino-2-methyl-5-(diphosphooxymethyl)pyrimidine. Residue 150–152 (SVT) coordinates 2-[(2R,5Z)-2-carboxy-4-methylthiazol-5(2H)-ylidene]ethyl phosphate. Residue K153 coordinates 4-amino-2-methyl-5-(diphosphooxymethyl)pyrimidine. G180 lines the 2-[(2R,5Z)-2-carboxy-4-methylthiazol-5(2H)-ylidene]ethyl phosphate pocket.

This sequence belongs to the thiamine-phosphate synthase family. Requires Mg(2+) as cofactor.

The catalysed reaction is 2-[(2R,5Z)-2-carboxy-4-methylthiazol-5(2H)-ylidene]ethyl phosphate + 4-amino-2-methyl-5-(diphosphooxymethyl)pyrimidine + 2 H(+) = thiamine phosphate + CO2 + diphosphate. It catalyses the reaction 2-(2-carboxy-4-methylthiazol-5-yl)ethyl phosphate + 4-amino-2-methyl-5-(diphosphooxymethyl)pyrimidine + 2 H(+) = thiamine phosphate + CO2 + diphosphate. The enzyme catalyses 4-methyl-5-(2-phosphooxyethyl)-thiazole + 4-amino-2-methyl-5-(diphosphooxymethyl)pyrimidine + H(+) = thiamine phosphate + diphosphate. Its pathway is cofactor biosynthesis; thiamine diphosphate biosynthesis; thiamine phosphate from 4-amino-2-methyl-5-diphosphomethylpyrimidine and 4-methyl-5-(2-phosphoethyl)-thiazole: step 1/1. Functionally, condenses 4-methyl-5-(beta-hydroxyethyl)thiazole monophosphate (THZ-P) and 2-methyl-4-amino-5-hydroxymethyl pyrimidine pyrophosphate (HMP-PP) to form thiamine monophosphate (TMP). The polypeptide is Thiamine-phosphate synthase (Nitrosospira multiformis (strain ATCC 25196 / NCIMB 11849 / C 71)).